Consider the following 592-residue polypeptide: MITGADFYHVMTAMVPLYVAMILAYGSVKWWRIFTPDQCSGINRFVALFAVPLLSFHFISTNNPYTMNLRFIAADTLQKLIVLALLTLWSHLSRRGSLEWTITLFSLSTLPNTLVMGIPLLKGMYGEFSGSLMVQIVVLQCIIWYTLMLFMFEYRGARILITEQFPDTAGAIASIVVDADVVSLDGRRDMIETEAEVKEDGKIHVTVRRSNASRSDVYSRRSMGFSSTTPRPSNLTNAEIYSLQSSRNPTPRGSSFNHTDFYSMVGRSSNFAAGDAFGVRTGATPRPSNYEEDAAAPNKAGSKYGQYPAPNPAMAAPPKPKKAANGQAKGEDGKDLHMFVWSSSASPVSDVFGNGAEYNDAAAVKEVRMAVASPRKADGVERDDFSFGNRGVAERDAEAGDEKSVAAAVSGEHGKPGLTPAPTAMPPTSVMTRLILIMVWRKLIRNPNTYSSLIGLIWSLVCFRWNFEMPAIILKSISILSDAGLGMAMFSLGLFMALQPRIIACGNKVATFAMAVRFLTGPAVMAAASIAVGLRGTLLHVAIVQAALPQGIVPFVFAKEYSVHPDILSTAVIFGMLIALPITLVYYILLGL.

At M1–D6 the chain is on the extracellular side. Residues F7 to S27 traverse the membrane as a helical segment. At V28 to Q38 the chain is on the cytoplasmic side. A helical membrane pass occupies residues C39–I59. V51 contacts (indol-3-yl)acetate. Topologically, residues S60–R70 are extracellular. Residues F71–H91 form a helical membrane-spanning segment. Topologically, residues L92–W100 are cytoplasmic. Residues T101–L121 form a helical membrane-spanning segment. (indol-3-yl)acetate contacts are provided by N112 and L114. The Extracellular segment spans residues K122–S131. A helical membrane pass occupies residues L132 to F152. (indol-3-yl)acetate is bound at residue Y145. The Cytoplasmic segment spans residues E153–S452. 2 disordered regions span residues R214 to T236 and G282 to E331. Over residues G224–T236 the composition is skewed to polar residues. Residues A309 to P318 are compositionally biased toward pro residues. Residues L453–I473 traverse the membrane as a helical segment. Topologically, residues L474 to S476 are extracellular. Residues I477 to A497 traverse the membrane as a helical segment. Over L498–T511 the chain is Cytoplasmic. The helical transmembrane segment at F512–V532 threads the bilayer. The Extracellular portion of the chain corresponds to G533–T537. The helical transmembrane segment at L538–A558 threads the bilayer. Positions 552 and 553 each coordinate (indol-3-yl)acetate. Residues K559–A571 lie on the Cytoplasmic side of the membrane. A helical membrane pass occupies residues V572–L592.

It belongs to the auxin efflux carrier (TC 2.A.69.1) family. As to quaternary structure, homodimer. As to expression, expressed at low levels in roots and leaves. Expressed in roots, stem bases, stems, leaves and young panicles.

It localises to the membrane. May act as a component of the auxin efflux carrier. The protein is Probable auxin efflux carrier component 1c of Oryza sativa subsp. japonica (Rice).